A 276-amino-acid chain; its full sequence is 2-dehydro-3-deoxyphosphooctonate aldolase (276 aa).

Belongs to the KdsA family.

The protein resides in the cytoplasm. It carries out the reaction D-arabinose 5-phosphate + phosphoenolpyruvate + H2O = 3-deoxy-alpha-D-manno-2-octulosonate-8-phosphate + phosphate. Its pathway is carbohydrate biosynthesis; 3-deoxy-D-manno-octulosonate biosynthesis; 3-deoxy-D-manno-octulosonate from D-ribulose 5-phosphate: step 2/3. It functions in the pathway bacterial outer membrane biogenesis; lipopolysaccharide biosynthesis. The polypeptide is 2-dehydro-3-deoxyphosphooctonate aldolase (Stenotrophomonas maltophilia (strain R551-3)).